Here is a 380-residue protein sequence, read N- to C-terminus: DNA primase small subunit PriS (380 aa).

Catalysis depends on residues aspartate 103, aspartate 105, and aspartate 284.

The protein belongs to the eukaryotic-type primase small subunit family. As to quaternary structure, heterodimer of a small subunit (PriS) and a large subunit (PriL). Mg(2+) serves as cofactor. Mn(2+) is required as a cofactor.

In terms of biological role, catalytic subunit of DNA primase, an RNA polymerase that catalyzes the synthesis of short RNA molecules used as primers for DNA polymerase during DNA replication. The small subunit contains the primase catalytic core and has DNA synthesis activity on its own. Binding to the large subunit stabilizes and modulates the activity, increasing the rate of DNA synthesis while decreasing the length of the DNA fragments, and conferring RNA synthesis capability. The DNA polymerase activity may enable DNA primase to also catalyze primer extension after primer synthesis. May also play a role in DNA repair. This is DNA primase small subunit PriS from Methanocorpusculum labreanum (strain ATCC 43576 / DSM 4855 / Z).